The following is a 460-amino-acid chain: DEAD-box helicase Dbp80 (460 aa).

S26 is modified (phosphoserine). T30 is modified (phosphothreonine). Residues 73 to 101 (KTFEALHLKASLLKGIYAMGFNTPSKIQE) carry the Q motif motif. One can recognise a Helicase ATP-binding domain in the interval 106-276 (TLLADPPQNM…RLIVADPTII (171 aa)). Position 119–126 (119–126 (SQSGTGKT)) interacts with ATP. Positions 223-226 (DEAD) match the DEAD box motif. The Helicase C-terminal domain occupies 287–455 (NIKQYYVKCK…VLNTDSADDI (169 aa)).

Belongs to the DEAD box helicase family. DDX19/DBP5 subfamily.

The protein localises to the cytoplasm. It localises to the nucleus. It is found in the nucleoplasm. The enzyme catalyses ATP + H2O = ADP + phosphate + H(+). Its function is as follows. ATP-dependent RNA helicase involved in mRNA export from the nucleus. In Drosophila melanogaster (Fruit fly), this protein is DEAD-box helicase Dbp80 (Dbp80).